A 507-amino-acid chain; its full sequence is Trigger factor (507 aa).

The region spanning 162 to 243 is the PPIase FKBP-type domain; that stretch reads GDFVSLDLSA…VRGVKEKELP (82 aa). Positions 434 to 507 are disordered; that stretch reads NLPRRPSGEA…DSELPASETK (74 aa). Over residues 442–460 the composition is skewed to acidic residues; that stretch reads EAEDDVRDISDELDAEELE. Positions 461 to 488 are enriched in low complexity; that stretch reads VPAAAPSAEVTAAAGDEATATATATDAD.

This sequence belongs to the FKBP-type PPIase family. Tig subfamily.

The protein resides in the cytoplasm. The enzyme catalyses [protein]-peptidylproline (omega=180) = [protein]-peptidylproline (omega=0). Functionally, involved in protein export. Acts as a chaperone by maintaining the newly synthesized protein in an open conformation. Functions as a peptidyl-prolyl cis-trans isomerase. In Parafrankia sp. (strain EAN1pec), this protein is Trigger factor.